A 226-amino-acid polypeptide reads, in one-letter code: NADH-ubiquinone oxidoreductase chain 6 (226 aa).

5 helical membrane passes run 2 to 22 (STLG…FVIL), 28 to 48 (IYSI…LLTV), 56 to 76 (IYIL…VMMI), 90 to 110 (YNIY…ILIT), and 169 to 189 (IWFI…IYIT).

The protein belongs to the complex I subunit 6 family.

It localises to the mitochondrion membrane. It carries out the reaction a ubiquinone + NADH + 5 H(+)(in) = a ubiquinol + NAD(+) + 4 H(+)(out). Core subunit of the mitochondrial membrane respiratory chain NADH dehydrogenase (Complex I) that is believed to belong to the minimal assembly required for catalysis. Complex I functions in the transfer of electrons from NADH to the respiratory chain. The immediate electron acceptor for the enzyme is believed to be ubiquinone. This is NADH-ubiquinone oxidoreductase chain 6 (nad6) from Dictyostelium citrinum (Slime mold).